The primary structure comprises 223 residues: Protein Wnt-1 (223 aa).

Intrachain disulfides connect C7/C24, C72/C86, and C74/C81. Residue S78 is the site of O-palmitoleoyl serine; by PORCN attachment. The segment at 110-135 (VTMRNDGSPSDRETESSFVPYNPSHK) is disordered. A compositionally biased stretch (polar residues) spans 125–135 (SSFVPYNPSHK). 6 cysteine pairs are disulfide-bonded: C152/C183, C168/C178, C182/C222, C198/C213, C200/C210, and C205/C206. N169 carries N-linked (GlcNAc...) asparagine glycosylation.

The protein belongs to the Wnt family. In terms of processing, palmitoleoylation is required for efficient binding to frizzled receptors. Palmitoleoylation is necessary for proper trafficking to cell surface. Depalmitoleoylated by NOTUM, leading to inhibit Wnt signaling pathway.

It localises to the secreted. It is found in the extracellular space. Its subcellular location is the extracellular matrix. Its function is as follows. Ligand for members of the frizzled family of seven transmembrane receptors. Probable developmental protein. The polypeptide is Protein Wnt-1 (WNT-1) (Strongylocentrotus purpuratus (Purple sea urchin)).